We begin with the raw amino-acid sequence, 96 residues long: Co-chaperonin GroES (96 aa).

Belongs to the GroES chaperonin family. In terms of assembly, heptamer of 7 subunits arranged in a ring. Interacts with the chaperonin GroEL.

It localises to the cytoplasm. Its function is as follows. Together with the chaperonin GroEL, plays an essential role in assisting protein folding. The GroEL-GroES system forms a nano-cage that allows encapsulation of the non-native substrate proteins and provides a physical environment optimized to promote and accelerate protein folding. GroES binds to the apical surface of the GroEL ring, thereby capping the opening of the GroEL channel. The protein is Co-chaperonin GroES of Delftia acidovorans (strain DSM 14801 / SPH-1).